The sequence spans 64 residues: Putative calcium channel toxin Tx758 (64 aa).

A signal peptide spans M1–A18. Residues E19–R27 constitute a propeptide that is removed on maturation. 3 cysteine pairs are disulfide-bonded: C29-C43, C36-C49, and C42-C58.

The protein belongs to the scorpion calcin-like family. Expressed by the venom gland.

Its subcellular location is the secreted. Functionally, may increase intracellular calcium release through the activation of nuclear inositol 1,4,5-trisphosphate receptors (ITPR) of cardiomyocytes, thereby causing an increase in the contraction frequency of these cells. This Buthus israelis (Israeli scorpion) protein is Putative calcium channel toxin Tx758.